The chain runs to 744 residues: FNIP repeat-containing protein cigB (744 aa).

9 FNIP repeats span residues 340–376 (FNQK…TVTT), 383–422 (FNQK…TVIL), 426–462 (FNQK…TVTR), 469–508 (FNQK…TITL), 512–550 (FNQK…TTVR), 555–594 (FNQK…TVIL), 598–635 (FNQK…VTTV), 641–678 (FNQK…VTTV), and 684–723 (FNQK…NVYI).

This chain is FNIP repeat-containing protein cigB (cigB), found in Dictyostelium discoideum (Social amoeba).